The chain runs to 151 residues: Ribonuclease H (151 aa).

The region spanning 1–146 (MSDLFAYTDG…ADELARAGMA (146 aa)) is the RNase H type-1 domain. Residues D9, E52, D74, and D138 each coordinate Mg(2+).

It belongs to the RNase H family. Monomer. The cofactor is Mg(2+).

Its subcellular location is the cytoplasm. It carries out the reaction Endonucleolytic cleavage to 5'-phosphomonoester.. Its function is as follows. Endonuclease that specifically degrades the RNA of RNA-DNA hybrids. The polypeptide is Ribonuclease H (Cereibacter sphaeroides (strain ATCC 17025 / ATH 2.4.3) (Rhodobacter sphaeroides)).